We begin with the raw amino-acid sequence, 399 residues long: Tyrosine--tRNA ligase (399 aa).

L-tyrosine is bound at residue Y36. The 'HIGH' region motif lies at 41 to 50; that stretch reads PTAPSLHIGN. L-tyrosine-binding residues include Y166 and Q170. The 'KMSKS' region signature appears at 226-230; the sequence is KMGKS. An ATP-binding site is contributed by K229. The S4 RNA-binding domain maps to 332-395; sequence TRLVDVIVDL…KKRFVTVQVI (64 aa).

This sequence belongs to the class-I aminoacyl-tRNA synthetase family. TyrS type 1 subfamily. Homodimer.

The protein resides in the cytoplasm. It carries out the reaction tRNA(Tyr) + L-tyrosine + ATP = L-tyrosyl-tRNA(Tyr) + AMP + diphosphate + H(+). Its function is as follows. Catalyzes the attachment of tyrosine to tRNA(Tyr) in a two-step reaction: tyrosine is first activated by ATP to form Tyr-AMP and then transferred to the acceptor end of tRNA(Tyr). The chain is Tyrosine--tRNA ligase from Mycoplasma pneumoniae (strain ATCC 29342 / M129 / Subtype 1) (Mycoplasmoides pneumoniae).